Reading from the N-terminus, the 268-residue chain is tRNA (guanine-N(1)-)-methyltransferase (268 aa).

Residues Gly-110 and 129–134 (IGDFVM) each bind S-adenosyl-L-methionine. A disordered region spans residues 246–268 (WGAPPAPVKRHRKRRPETTESAS).

Belongs to the RNA methyltransferase TrmD family. As to quaternary structure, homodimer.

It localises to the cytoplasm. It carries out the reaction guanosine(37) in tRNA + S-adenosyl-L-methionine = N(1)-methylguanosine(37) in tRNA + S-adenosyl-L-homocysteine + H(+). Specifically methylates guanosine-37 in various tRNAs. This Deinococcus deserti (strain DSM 17065 / CIP 109153 / LMG 22923 / VCD115) protein is tRNA (guanine-N(1)-)-methyltransferase.